The chain runs to 213 residues: Thymidylate kinase (213 aa).

11-18 (GGEGAGKT) serves as a coordination point for ATP.

This sequence belongs to the thymidylate kinase family.

It carries out the reaction dTMP + ATP = dTDP + ADP. Functionally, phosphorylation of dTMP to form dTDP in both de novo and salvage pathways of dTTP synthesis. This Shouchella clausii (strain KSM-K16) (Alkalihalobacillus clausii) protein is Thymidylate kinase.